A 502-amino-acid polypeptide reads, in one-letter code: UDP-N-acetylglucosamine diphosphorylase 2 (502 aa).

The Substrate binding motif lies at 130-133 (LSGG). Asn-250 provides a ligand contact to substrate. Positions 332–333 (EY) match the Substrate binding motif. Residue Lys-429 participates in substrate binding.

It belongs to the UDPGP type 1 family. As to quaternary structure, monomer. Mg(2+) serves as cofactor. Requires Mn(2+) as cofactor. In terms of tissue distribution, expressed in root tips, stipules, lateral root primordia, immature anthers and at the branching points of the flowering shoots.

The protein resides in the cytoplasm. It catalyses the reaction N-acetyl-alpha-D-glucosamine 1-phosphate + UTP + H(+) = UDP-N-acetyl-alpha-D-glucosamine + diphosphate. The catalysed reaction is N-acetyl-alpha-D-galactosamine 1-phosphate + UTP + H(+) = UDP-N-acetyl-alpha-D-galactosamine + diphosphate. It carries out the reaction alpha-D-glucose 1-phosphate + UTP + H(+) = UDP-alpha-D-glucose + diphosphate. Its pathway is nucleotide-sugar biosynthesis; UDP-N-acetyl-alpha-D-glucosamine biosynthesis; UDP-N-acetyl-alpha-D-glucosamine from N-acetyl-alpha-D-glucosamine 1-phosphate: step 1/1. In terms of biological role, uridylyltransferase involved in the biosynthesis of UDP-glucosamine, an essential precursor for glycoprotein and glycolipid synthesis. Can use UDP-glucosamine, the 4-epimer UDP-galactosamine and UDP-glucose as substrates. Acts redundantly with GLCNAC1PUT1. Required for gametogenesis and embryo development. In Arabidopsis thaliana (Mouse-ear cress), this protein is UDP-N-acetylglucosamine diphosphorylase 2 (GLCNAC1PUT2).